The primary structure comprises 313 residues: Tyrosine recombinase XerC (313 aa).

Positions 1-85 (MNDQVEAFLR…AVKSFFAFLT (85 aa)) constitute a Core-binding (CB) domain. The Tyr recombinase domain maps to 106–291 (DLPRALTPHQ…NHASSAQPVR (186 aa)). Residues R147, K171, H243, R246, and H269 contribute to the active site. The active-site O-(3'-phospho-DNA)-tyrosine intermediate is the Y278.

This sequence belongs to the 'phage' integrase family. XerC subfamily. Forms a cyclic heterotetrameric complex composed of two molecules of XerC and two molecules of XerD.

It localises to the cytoplasm. Its function is as follows. Site-specific tyrosine recombinase, which acts by catalyzing the cutting and rejoining of the recombining DNA molecules. The XerC-XerD complex is essential to convert dimers of the bacterial chromosome into monomers to permit their segregation at cell division. It also contributes to the segregational stability of plasmids. This chain is Tyrosine recombinase XerC, found in Roseiflexus sp. (strain RS-1).